The sequence spans 105 residues: MSTKNKKAAGGNGVAPKQTRQQSHDSQDYSSFKTVLFYCMLIVFLPVLTFFVLKGFVLDQFLDISEVKVNIASAVGAVVALHIALGLYIYRAYFGAPGSKGSKTD.

The disordered stretch occupies residues 1–26 (MSTKNKKAAGGNGVAPKQTRQQSHDS). Topologically, residues 1–36 (MSTKNKKAAGGNGVAPKQTRQQSHDSQDYSSFKTVL) are cytoplasmic. Residues 37-57 (FYCMLIVFLPVLTFFVLKGFV) traverse the membrane as a helical segment. Over 58-68 (LDQFLDISEVK) the chain is Lumenal. Residues 69–89 (VNIASAVGAVVALHIALGLYI) traverse the membrane as a helical segment. Over 90-105 (YRAYFGAPGSKGSKTD) the chain is Cytoplasmic.

The protein belongs to the VMA21 family.

Its subcellular location is the endoplasmic reticulum membrane. The protein resides in the endoplasmic reticulum-Golgi intermediate compartment membrane. It is found in the cytoplasmic vesicle. The protein localises to the COPII-coated vesicle membrane. Required for the assembly of the V0 complex of the vacuolar ATPase (V-ATPase) in the endoplasmic reticulum. This Drosophila melanogaster (Fruit fly) protein is Vacuolar ATPase assembly integral membrane protein VMA21 homolog.